A 253-amino-acid polypeptide reads, in one-letter code: Glucosamine-6-phosphate deaminase (253 aa).

The Proton acceptor; for enolization step role is filled by Asp65. Catalysis depends on Asn133, which acts as the For ring-opening step. The Proton acceptor; for ring-opening step role is filled by His135. The For ring-opening step role is filled by Glu140.

It belongs to the glucosamine/galactosamine-6-phosphate isomerase family. NagB subfamily.

The catalysed reaction is alpha-D-glucosamine 6-phosphate + H2O = beta-D-fructose 6-phosphate + NH4(+). It functions in the pathway amino-sugar metabolism; N-acetylneuraminate degradation; D-fructose 6-phosphate from N-acetylneuraminate: step 5/5. Catalyzes the reversible isomerization-deamination of glucosamine 6-phosphate (GlcN6P) to form fructose 6-phosphate (Fru6P) and ammonium ion. This is Glucosamine-6-phosphate deaminase from Corynebacterium glutamicum (strain ATCC 13032 / DSM 20300 / JCM 1318 / BCRC 11384 / CCUG 27702 / LMG 3730 / NBRC 12168 / NCIMB 10025 / NRRL B-2784 / 534).